We begin with the raw amino-acid sequence, 132 residues long: Small ribosomal subunit protein uS8 (132 aa).

The protein belongs to the universal ribosomal protein uS8 family. In terms of assembly, part of the 30S ribosomal subunit. Contacts proteins S5 and S12.

One of the primary rRNA binding proteins, it binds directly to 16S rRNA central domain where it helps coordinate assembly of the platform of the 30S subunit. This is Small ribosomal subunit protein uS8 from Bacillus anthracis (strain A0248).